The sequence spans 595 residues: UvrABC system protein C (595 aa).

Residues 17–94 (IEPGCYLMKD…IKQYQPRYNI (78 aa)) form the GIY-YIG domain. A UVR domain is found at 199–234 (KTILHNLEQKMQESSESLDFERAKEYRDLIQHIHNL).

This sequence belongs to the UvrC family. Interacts with UvrB in an incision complex.

The protein localises to the cytoplasm. Its function is as follows. The UvrABC repair system catalyzes the recognition and processing of DNA lesions. UvrC both incises the 5' and 3' sides of the lesion. The N-terminal half is responsible for the 3' incision and the C-terminal half is responsible for the 5' incision. The protein is UvrABC system protein C of Staphylococcus saprophyticus subsp. saprophyticus (strain ATCC 15305 / DSM 20229 / NCIMB 8711 / NCTC 7292 / S-41).